A 208-amino-acid chain; its full sequence is Ubiquitin-conjugating enzyme E2 S (208 aa).

One can recognise a UBC core domain in the interval 14–160; the sequence is QTIRQVMKEL…ARMMTEIHAQ (147 aa). The Glycyl thioester intermediate role is filled by Cys98. The segment at 161–196 is disordered; that stretch reads PAKCGAGASDAKDDDGPSTKKHAGVDKKLQDKKKEK. Residues 170-196 show a composition bias toward basic and acidic residues; it reads DAKDDDGPSTKKHAGVDKKLQDKKKEK.

The protein belongs to the ubiquitin-conjugating enzyme family.

The enzyme catalyses S-ubiquitinyl-[E1 ubiquitin-activating enzyme]-L-cysteine + [E2 ubiquitin-conjugating enzyme]-L-cysteine = [E1 ubiquitin-activating enzyme]-L-cysteine + S-ubiquitinyl-[E2 ubiquitin-conjugating enzyme]-L-cysteine.. Its pathway is protein modification; protein ubiquitination. Its function is as follows. Catalyzes the covalent attachment of ubiquitin to other proteins. Acts as an essential factor of the anaphase promoting complex/cyclosome (APC/C), a cell cycle-regulated ubiquitin ligase that controls progression through mitosis. Acts by specifically elongating polyubiquitin chains initiated by the E2 enzyme vih/UbcH10 on APC/C substrates, enhancing the degradation of APC/C substrates by the proteasome and promoting mitotic exit. This chain is Ubiquitin-conjugating enzyme E2 S, found in Drosophila grimshawi (Hawaiian fruit fly).